A 438-amino-acid chain; its full sequence is Glutamate-1-semialdehyde 2,1-aminomutase (438 aa).

Lys274 bears the N6-(pyridoxal phosphate)lysine mark.

Belongs to the class-III pyridoxal-phosphate-dependent aminotransferase family. HemL subfamily. Homodimer. Requires pyridoxal 5'-phosphate as cofactor.

It localises to the cytoplasm. It carries out the reaction (S)-4-amino-5-oxopentanoate = 5-aminolevulinate. The protein operates within porphyrin-containing compound metabolism; protoporphyrin-IX biosynthesis; 5-aminolevulinate from L-glutamyl-tRNA(Glu): step 2/2. The sequence is that of Glutamate-1-semialdehyde 2,1-aminomutase from Salinibacter ruber (strain DSM 13855 / M31).